Reading from the N-terminus, the 204-residue chain is Uridylate kinase (204 aa).

26 to 31 (GAGKGT) contributes to the ATP binding site. The NMP stretch occupies residues 46 to 76 (SAGDLLRAEQGRAGSQYGELIKNCIKEGQIV). Residues arginine 52, 74-76 (QIV), 104-107 (GFPR), and glutamine 111 each bind a ribonucleoside 5'-phosphate. The interval 141 to 151 (ERGKTSGRSDD) is LID. Arginine 142 provides a ligand contact to ATP. Residues arginine 148 and arginine 159 each contribute to the a ribonucleoside 5'-phosphate site. Position 187 (arginine 187) interacts with ATP.

Belongs to the adenylate kinase family. UMP-CMP kinase subfamily. Monomer. The cofactor is Mg(2+).

Its subcellular location is the cytoplasm. The protein resides in the nucleus. It catalyses the reaction UMP + ATP = UDP + ADP. In terms of biological role, catalyzes the phosphorylation of pyrimidine nucleoside monophosphates at the expense of ATP. Plays an important role in de novo pyrimidine nucleotide biosynthesis. Has preference for UMP and dUMP as phosphate acceptors, but can also use CMP, dCMP, AMP, GMP, dGMP and dTMP. ATP and dATP are the best phosphate donors, but can also use GTP, dGTP, dCTP, and dTTP to some degree. This chain is Uridylate kinase, found in Saccharomyces cerevisiae (strain ATCC 204508 / S288c) (Baker's yeast).